We begin with the raw amino-acid sequence, 126 residues long: Holo-[acyl-carrier-protein] synthase (126 aa).

2 residues coordinate Mg(2+): aspartate 8 and glutamate 56.

Belongs to the P-Pant transferase superfamily. AcpS family. Mg(2+) is required as a cofactor.

It is found in the cytoplasm. It catalyses the reaction apo-[ACP] + CoA = holo-[ACP] + adenosine 3',5'-bisphosphate + H(+). Transfers the 4'-phosphopantetheine moiety from coenzyme A to a Ser of acyl-carrier-protein. The polypeptide is Holo-[acyl-carrier-protein] synthase (Clostridium tetani (strain Massachusetts / E88)).